The chain runs to 199 residues: Putative pseudouridine methyltransferase (199 aa).

The S-adenosyl-L-methionine site is built by Met132 and Cys186.

It belongs to the methyltransferase superfamily. TrmY family.

The protein resides in the cytoplasm. The protein is Putative pseudouridine methyltransferase of Vibrio atlanticus (strain LGP32) (Vibrio splendidus (strain Mel32)).